The sequence spans 350 residues: FAD:protein FMN transferase (350 aa).

The N-terminal stretch at 1 to 19 (MKMTFCRAVCLAAAFLLMG) is a signal peptide. Cys20 is lipidated: N-palmitoyl cysteine. Cys20 is lipidated: S-diacylglycerol cysteine. Residues Met41, Tyr78, 119–121 (AMD), and Asp181 contribute to the FAD site. Thr184 provides a ligand contact to Mg(2+). The FAD site is built by Glu187 and Ile272. 3 residues coordinate Mg(2+): Asp298, Asp301, and Thr302.

The protein belongs to the ApbE family. Homodimer. Mg(2+) is required as a cofactor.

The protein resides in the cell inner membrane. The enzyme catalyses L-threonyl-[protein] + FAD = FMN-L-threonyl-[protein] + AMP + H(+). Flavin transferase that catalyzes the transfer of the FMN moiety of FAD and its covalent binding to the hydroxyl group of a threonine residue in a target flavoprotein such as NqrB and NqrC, two subunits of the NQR complex. The protein is FAD:protein FMN transferase of Salmonella typhimurium (strain LT2 / SGSC1412 / ATCC 700720).